We begin with the raw amino-acid sequence, 213 residues long: 3-isopropylmalate dehydratase small subunit (213 aa).

It belongs to the LeuD family. LeuD type 1 subfamily. In terms of assembly, heterodimer of LeuC and LeuD.

The catalysed reaction is (2R,3S)-3-isopropylmalate = (2S)-2-isopropylmalate. It functions in the pathway amino-acid biosynthesis; L-leucine biosynthesis; L-leucine from 3-methyl-2-oxobutanoate: step 2/4. Its function is as follows. Catalyzes the isomerization between 2-isopropylmalate and 3-isopropylmalate, via the formation of 2-isopropylmaleate. This Pseudomonas savastanoi pv. phaseolicola (strain 1448A / Race 6) (Pseudomonas syringae pv. phaseolicola (strain 1448A / Race 6)) protein is 3-isopropylmalate dehydratase small subunit.